We begin with the raw amino-acid sequence, 196 residues long: MRLPLLLSAGVLLVVSLPCPPCRALLSRGPIPGARQAAQHPQPLDFFQLPPQPQQPQQPQARPVLYRMGEEYFLRLGNLNKSPAAPLLPASSPVAGGSGSRLSPDEAAANFFRALLQQLPLPRRQLDSPAGPAERGEENALGSRQETPERERRSEEPPISLDLTFHLLREVLEMARAEQLAQQAHSNRKLMEIIGK.

The N-terminal stretch at 1 to 24 (MRLPLLLSAGVLLVVSLPCPPCRA) is a signal peptide. The propeptide occupies 25–153 (LLSRGPIPGA…RQETPERERR (129 aa)). A disordered region spans residues 122–158 (PRRQLDSPAGPAERGEENALGSRQETPERERRSEEPP). A compositionally biased stretch (basic and acidic residues) spans 146 to 156 (ETPERERRSEE). Ile-194 is modified (isoleucine amide).

The protein belongs to the sauvagine/corticotropin-releasing factor/urotensin I family. Interacts (via C-terminus) with CRFR1 (via N-terminal extracellular domain). In terms of tissue distribution, produced by the hypothalamus.

It is found in the secreted. Functionally, hormone regulating the release of corticotropin from pituitary gland. Induces NLRP6 in intestinal epithelial cells, hence may influence gut microbiota profile. The protein is Corticoliberin (CRH) of Canis lupus familiaris (Dog).